Reading from the N-terminus, the 147-residue chain is Ribosome maturation factor RimP (147 aa).

The protein belongs to the RimP family.

It localises to the cytoplasm. Its function is as follows. Required for maturation of 30S ribosomal subunits. The polypeptide is Ribosome maturation factor RimP (Thermosipho melanesiensis (strain DSM 12029 / CIP 104789 / BI429)).